The sequence spans 138 residues: Acidic phospholipase A2 Cvv-E6f (138 aa).

Positions 1 to 16 are cleaved as a signal peptide; sequence MRTLWIVAVLLLGVEG. Disulfide bonds link cysteine 42–cysteine 131, cysteine 44–cysteine 60, cysteine 59–cysteine 111, cysteine 65–cysteine 138, cysteine 66–cysteine 104, cysteine 73–cysteine 97, and cysteine 91–cysteine 102. Residues tyrosine 43, glycine 45, and glycine 47 each contribute to the Ca(2+) site. Histidine 63 is a catalytic residue. Ca(2+) is bound at residue aspartate 64. The active site involves aspartate 105.

It depends on Ca(2+) as a cofactor. In terms of tissue distribution, expressed by the venom gland.

The protein localises to the secreted. The catalysed reaction is a 1,2-diacyl-sn-glycero-3-phosphocholine + H2O = a 1-acyl-sn-glycero-3-phosphocholine + a fatty acid + H(+). Snake venom phospholipase A2 (PLA2) that shows very low inhibition of ADP-induced platelet aggregation in platelet-rich plasma of human, rabbit and guinea pig. In vivo, shows efficient edema-inducing activities in rat paws. PLA2 catalyzes the calcium-dependent hydrolysis of the 2-acyl groups in 3-sn-phosphoglycerides. In Crotalus viridis viridis (Prairie rattlesnake), this protein is Acidic phospholipase A2 Cvv-E6f.